A 111-amino-acid chain; its full sequence is uncharacterized protein (111 aa).

This is an uncharacterized protein from Schizosaccharomyces pombe (strain 972 / ATCC 24843) (Fission yeast).